The chain runs to 266 residues: UPF0294 protein YafD (266 aa).

This sequence belongs to the UPF0294 family.

It is found in the cytoplasm. The sequence is that of UPF0294 protein YafD from Salmonella agona (strain SL483).